We begin with the raw amino-acid sequence, 62 residues long: High-potential iron-sulfur protein (62 aa).

Residues C22, C25, C40, and C55 each contribute to the [4Fe-4S] cluster site.

It belongs to the high-potential iron-sulfur protein (HiPIP) family. Homodimer.

Specific class of high-redox-potential 4Fe-4S ferredoxins. Functions in anaerobic electron transport in most purple and in some other photosynthetic bacteria and in at least one genus (Paracoccus) of halophilic, denitrifying bacteria. This is High-potential iron-sulfur protein (hip) from Rhodocyclus tenuis (Rhodospirillum tenue).